Here is a 115-residue protein sequence, read N- to C-terminus: NADH-ubiquinone oxidoreductase chain 3 (115 aa).

3 helical membrane-spanning segments follow: residues 5–25 (TALL…FWFF), 55–75 (FFLV…LLPL), and 86–106 (IMML…AYEW).

It belongs to the complex I subunit 3 family. As to quaternary structure, core subunit of respiratory chain NADH dehydrogenase (Complex I) which is composed of 45 different subunits. Interacts with TMEM186. Interacts with TMEM242.

Its subcellular location is the mitochondrion inner membrane. It carries out the reaction a ubiquinone + NADH + 5 H(+)(in) = a ubiquinol + NAD(+) + 4 H(+)(out). Functionally, core subunit of the mitochondrial membrane respiratory chain NADH dehydrogenase (Complex I) which catalyzes electron transfer from NADH through the respiratory chain, using ubiquinone as an electron acceptor. Essential for the catalytic activity of complex I. The chain is NADH-ubiquinone oxidoreductase chain 3 from Peromyscus sejugis (Santa Cruz mouse).